A 37-amino-acid chain; its full sequence is Cytochrome b6-f complex subunit 7 (37 aa).

A helical transmembrane segment spans residues 5–25 (IFGTAFLFIVLVPVGLALGAF).

The protein belongs to the PetM family. In terms of assembly, the 4 large subunits of the cytochrome b6-f complex are cytochrome b6, subunit IV (17 kDa polypeptide, PetD), cytochrome f and the Rieske protein, while the 4 small subunits are PetG, PetL, PetM and PetN. The complex functions as a dimer.

It is found in the cellular thylakoid membrane. Functionally, component of the cytochrome b6-f complex, which mediates electron transfer between photosystem II (PSII) and photosystem I (PSI), cyclic electron flow around PSI, and state transitions. The protein is Cytochrome b6-f complex subunit 7 of Synechococcus elongatus (strain ATCC 33912 / PCC 7942 / FACHB-805) (Anacystis nidulans R2).